We begin with the raw amino-acid sequence, 334 residues long: N-acetyl-gamma-glutamyl-phosphate reductase (334 aa).

The active site involves C154.

The protein belongs to the NAGSA dehydrogenase family. Type 1 subfamily.

It localises to the cytoplasm. It carries out the reaction N-acetyl-L-glutamate 5-semialdehyde + phosphate + NADP(+) = N-acetyl-L-glutamyl 5-phosphate + NADPH + H(+). Its pathway is amino-acid biosynthesis; L-arginine biosynthesis; N(2)-acetyl-L-ornithine from L-glutamate: step 3/4. Functionally, catalyzes the NADPH-dependent reduction of N-acetyl-5-glutamyl phosphate to yield N-acetyl-L-glutamate 5-semialdehyde. This Salmonella typhi protein is N-acetyl-gamma-glutamyl-phosphate reductase.